Consider the following 295-residue polypeptide: Acetaldehyde dehydrogenase 2 (295 aa).

17-20 (TGNI) contributes to the NAD(+) binding site. Catalysis depends on Cys132, which acts as the Acyl-thioester intermediate. NAD(+) contacts are provided by residues 164 to 172 (SVGPASRAN) and Asn275.

It belongs to the acetaldehyde dehydrogenase family.

The catalysed reaction is acetaldehyde + NAD(+) + CoA = acetyl-CoA + NADH + H(+). In Salinispora arenicola (strain CNS-205), this protein is Acetaldehyde dehydrogenase 2.